The following is a 205-amino-acid chain: Holliday junction branch migration complex subunit RuvA (205 aa).

Residues 1 to 64 (MIGKLKGLID…EDQIKLFGFR (64 aa)) are domain I. The interval 65–143 (SDVEREWFRL…AFADVDPGVI (79 aa)) is domain II. The interval 144–154 (RLSGAIEDSRA) is flexible linker. Positions 154–205 (APQPIADAISALINLGYGQPQAAAAIAAASRAAGDKAETAQLIRLGLKELAK) are domain III.

It belongs to the RuvA family. In terms of assembly, homotetramer. Forms an RuvA(8)-RuvB(12)-Holliday junction (HJ) complex. HJ DNA is sandwiched between 2 RuvA tetramers; dsDNA enters through RuvA and exits via RuvB. An RuvB hexamer assembles on each DNA strand where it exits the tetramer. Each RuvB hexamer is contacted by two RuvA subunits (via domain III) on 2 adjacent RuvB subunits; this complex drives branch migration. In the full resolvosome a probable DNA-RuvA(4)-RuvB(12)-RuvC(2) complex forms which resolves the HJ.

It is found in the cytoplasm. In terms of biological role, the RuvA-RuvB-RuvC complex processes Holliday junction (HJ) DNA during genetic recombination and DNA repair, while the RuvA-RuvB complex plays an important role in the rescue of blocked DNA replication forks via replication fork reversal (RFR). RuvA specifically binds to HJ cruciform DNA, conferring on it an open structure. The RuvB hexamer acts as an ATP-dependent pump, pulling dsDNA into and through the RuvAB complex. HJ branch migration allows RuvC to scan DNA until it finds its consensus sequence, where it cleaves and resolves the cruciform DNA. This is Holliday junction branch migration complex subunit RuvA from Bradyrhizobium sp. (strain BTAi1 / ATCC BAA-1182).